A 256-amino-acid polypeptide reads, in one-letter code: Thiazole synthase (256 aa).

K95 (schiff-base intermediate with DXP) is an active-site residue. 1-deoxy-D-xylulose 5-phosphate contacts are provided by residues G156, 182–183 (AG), and 204–205 (NT).

Belongs to the ThiG family. Homotetramer. Forms heterodimers with either ThiH or ThiS.

It is found in the cytoplasm. The catalysed reaction is [ThiS sulfur-carrier protein]-C-terminal-Gly-aminoethanethioate + 2-iminoacetate + 1-deoxy-D-xylulose 5-phosphate = [ThiS sulfur-carrier protein]-C-terminal Gly-Gly + 2-[(2R,5Z)-2-carboxy-4-methylthiazol-5(2H)-ylidene]ethyl phosphate + 2 H2O + H(+). It functions in the pathway cofactor biosynthesis; thiamine diphosphate biosynthesis. Functionally, catalyzes the rearrangement of 1-deoxy-D-xylulose 5-phosphate (DXP) to produce the thiazole phosphate moiety of thiamine. Sulfur is provided by the thiocarboxylate moiety of the carrier protein ThiS. In vitro, sulfur can be provided by H(2)S. This is Thiazole synthase from Alteromonas mediterranea (strain DSM 17117 / CIP 110805 / LMG 28347 / Deep ecotype).